We begin with the raw amino-acid sequence, 506 residues long: Cytochrome P450 52B1 (506 aa).

Residue Cys-451 participates in heme binding.

The protein belongs to the cytochrome P450 family. Heme serves as cofactor.

In terms of biological role, together with an NADPH cytochrome P450 the enzyme system catalyzes the terminal hydroxylation as the first step in the assimilation of alkanes and fatty acids. This Candida tropicalis (Yeast) protein is Cytochrome P450 52B1 (CYP52B1).